We begin with the raw amino-acid sequence, 92 residues long: Large ribosomal subunit protein bL25 (92 aa).

Belongs to the bacterial ribosomal protein bL25 family. Part of the 50S ribosomal subunit; part of the 5S rRNA/L5/L18/L25 subcomplex. Contacts the 5S rRNA. Binds to the 5S rRNA independently of L5 and L18.

In terms of biological role, this is one of the proteins that binds to the 5S RNA in the ribosome where it forms part of the central protuberance. In Aliivibrio salmonicida (strain LFI1238) (Vibrio salmonicida (strain LFI1238)), this protein is Large ribosomal subunit protein bL25.